Here is a 205-residue protein sequence, read N- to C-terminus: Probable GTP-binding protein EngB (205 aa).

In terms of domain architecture, EngB-type G spans 22 to 195 (NLPEVALVGR…LDLLDYFWNG (174 aa)). Residues 30–37 (GRSNVGKS), 57–61 (GKTQT), 75–78 (DLPG), 142–145 (TKAD), and 174–176 (FSA) each bind GTP. Ser-37 and Thr-59 together coordinate Mg(2+).

It belongs to the TRAFAC class TrmE-Era-EngA-EngB-Septin-like GTPase superfamily. EngB GTPase family. Mg(2+) serves as cofactor.

Necessary for normal cell division and for the maintenance of normal septation. The protein is Probable GTP-binding protein EngB of Heliobacterium modesticaldum (strain ATCC 51547 / Ice1).